Reading from the N-terminus, the 415-residue chain is Adenylosuccinate synthetase (415 aa).

Residues 12 to 18 (GDEGKGK) and 40 to 42 (GHT) each bind GTP. D13 serves as the catalytic Proton acceptor. Mg(2+) contacts are provided by D13 and G40. IMP-binding positions include 13–16 (DEGK), 38–41 (NAGH), T125, R139, Q219, T234, and R298. H41 (proton donor) is an active-site residue. Residue 294–300 (TTTGRPR) coordinates substrate. Residues R300, 326-328 (KLD), and 404-406 (STG) each bind GTP.

This sequence belongs to the adenylosuccinate synthetase family. Homodimer. Mg(2+) is required as a cofactor.

Its subcellular location is the cytoplasm. The catalysed reaction is IMP + L-aspartate + GTP = N(6)-(1,2-dicarboxyethyl)-AMP + GDP + phosphate + 2 H(+). It participates in purine metabolism; AMP biosynthesis via de novo pathway; AMP from IMP: step 1/2. Plays an important role in the de novo pathway of purine nucleotide biosynthesis. Catalyzes the first committed step in the biosynthesis of AMP from IMP. The chain is Adenylosuccinate synthetase from Wolinella succinogenes (strain ATCC 29543 / DSM 1740 / CCUG 13145 / JCM 31913 / LMG 7466 / NCTC 11488 / FDC 602W) (Vibrio succinogenes).